The chain runs to 88 residues: Small ribosomal subunit protein uS15 (88 aa).

The protein belongs to the universal ribosomal protein uS15 family. In terms of assembly, part of the 30S ribosomal subunit. Forms a bridge to the 50S subunit in the 70S ribosome, contacting the 23S rRNA.

Functionally, one of the primary rRNA binding proteins, it binds directly to 16S rRNA where it helps nucleate assembly of the platform of the 30S subunit by binding and bridging several RNA helices of the 16S rRNA. Its function is as follows. Forms an intersubunit bridge (bridge B4) with the 23S rRNA of the 50S subunit in the ribosome. This is Small ribosomal subunit protein uS15 from Polaromonas sp. (strain JS666 / ATCC BAA-500).